We begin with the raw amino-acid sequence, 119 residues long: Beta-2-microglobulin (119 aa).

The N-terminal stretch at 1–20 (MARFVVVALLVLLSLSGLEA) is a signal peptide. Residues 25–114 (PKIQVYSRHP…VTFSTPKTVK (90 aa)) form the Ig-like C1-type domain. Cysteine 45 and cysteine 100 are joined by a disulfide.

It belongs to the beta-2-microglobulin family. In terms of assembly, heterodimer of an alpha chain and a beta chain. Beta-2-microglobulin is the beta-chain of major histocompatibility complex class I molecules.

It localises to the secreted. Functionally, component of the class I major histocompatibility complex (MHC). Involved in the presentation of peptide antigens to the immune system. The sequence is that of Beta-2-microglobulin (B2M) from Callimico goeldii (Goeldi's marmoset).